Here is a 1693-residue protein sequence, read N- to C-terminus: MLPTILSISYEHISLDLSKYQTAYACEGKKLTIECDPGDVINLIRANYGRFSITICNDHGNVEWSVNCMFPKSLSVLNSRCAHKQSCGVLAATSMFGDPCPGTHKYLEAHYQCISAAQTSTTTNRPSPPPWVLSNGPPIFGNGSGLIHPPGVGAGAPPPPRLPTLPGVVGISGNPGLFNVPPQHTAVTHSTPWSSTTAVGGGRLKGGATSTTTTKHPAGRHDGLPPPPQLHHHHNHHGEDTASPTKPSSKLPAGGNVTSPSNTRILTGVGGSGTDDGTLLTTKSSPNRPPGTAASGSVAGNSSVVRTINNINLNAAGMSGGDDESKLFCGPTHARNLYWNMTRVGDVNVQPCPGGAAGIAKWRCVLMKRMPDSGYDEYDDDASSTTPAPSGGDCLHNSSSCEPPVSMAHKVNQRLRNFEPTWHPATPDLTQCRSLWLNNLEMRVNQRDSSLISIANDMSEVTSSKTLYGGDMLVTTKIIQTVSEKMMHDKETFPDQRQREAMIMELLHCVVKTGSNLLDESQLSSWLDLNPEDQMRVATSLLTGLEYNAFLLADTISGSAVWCKKSKIYSSVVFPDTDQWPLSSDRIELPRAALIDNSEGGLVRIVFAAFDRLESILKPSYDHFDLKSSRSYVRNTAILSNDSDVNAGEIQQRLRILNSKVISASLGKGRHIQLSQPITLTLKHLKTENVTNPTCVFWNYIDHAWSANGCSLESTNRTHSVCSCNHLTNFAILMDVVDEHQHSLFTMFDGNMRIFIYISIGICVVFIVIALLTLKLFNGVFVKSARTSIYTSIYLCLLAIELLFLLGIEQTETSIFCGFITIFLHCAILSGTAWFCYEAFHSYSTLTSDELLLEVDQTPKVNCYYLLSYGLSLSVVAISLVIDPSTYTQNDYCVLMEANALFYATFVVPVLVFFVAAIGYTFLSWIIMCRKSRTGLKTKEHTRLASVRFDIRCSFVFLLLLSAVWCSAYFYLRGAKMDDDTADVYGYCFICFNTLLGLYIFVFHCIQNEKIRREYRKYVRQHAWLPKCLRCSKTSISSGIVTGNGPTAGTLCSVSTSKKPKLPLGVSEEAHDDPQQQQQTPVPITEDAIMGATSDCELNEAQQRRTLKSGLMTGTLQAPTQTLGGHVVLERGSTLRSTGHASPTSSAGSTHLIFAHKQQQQQQQQGPLGESYYHQPDYYSWKQPSTGTGGLKTPREYYNNAGAAASSPQQAHEVFYWTQKPNSGQHGKKKRGAGGVPASPSGSLHSRTAAASQVLFYPSYKKTKPGQPTGYPQYAEALDPPLATGNAAAYYQQQQQLRRQQLHQQQQQLSSDEEQAEQHAHLLHLQRRAGSQQQLPAPPPHMAQYQQEFMQRQYRNKHSNCDLGMGDAYYNQGSVGGADGGPVYEEILSNRNSDVQHYEVGDFDVDEVYNNSVGTGVFNNMRAAVAAGGSRYGGGSLSGGSVSSRSQQQQLKKQQQQQSLAQQRSVRRCTADDDDDEDEEEDEEATAAEQLHDSVCDEDEEEDESDLEHDAHGLPPQSDERMRRLMAMQDEDFKRRFQRQLRKHGAPLDYGALPPGAGPQPEHNGAVFGVSGGVGEGSMRGAFRQQQQQQALNAKSPGGRLAVNELFGHGNSGPPLPPANQTPAQKRQQLQKLSPQSTTSSSSHTSHSNPNLHPHQLTHPHPHQHPPHHQQRHLSAMLDENNTVRCYLEPLAK.

At 1–753 (MLPTILSISY…LFTMFDGNMR (753 aa)) the chain is on the extracellular side. The 90-residue stretch at 25-114 (ACEGKKLTIE…KYLEAHYQCI (90 aa)) folds into the SUEL-type lectin domain. An N-linked (GlcNAc...) asparagine glycan is attached at Asn142. 2 stretches are compositionally biased toward polar residues: residues 185 to 198 (TAVT…STTA) and 256 to 265 (NVTSPSNTRI). The interval 185–299 (TAVTHSTPWS…PGTAASGSVA (115 aa)) is disordered. The N-linked (GlcNAc...) asparagine glycan is linked to Asn256. Low complexity predominate over residues 275–299 (DDGTLLTTKSSPNRPPGTAASGSVA). Residues Asn301, Asn340, Asn397, Asn641, Asn689, and Asn716 are each glycosylated (N-linked (GlcNAc...) asparagine). A disordered region spans residues 375–399 (YDEYDDDASSTTPAPSGGDCLHNSS). The GAIN-B domain maps to 564–740 (KKSKIYSSVV…AILMDVVDEH (177 aa)). Intrachain disulfides connect Cys695/Cys722 and Cys710/Cys724. Residues 695–740 (CVFWNYIDHAWSANGCSLESTNRTHSVCSCNHLTNFAILMDVVDEH) are GPS. The helical transmembrane segment at 754–774 (IFIYISIGICVVFIVIALLTL) threads the bilayer. The Cytoplasmic portion of the chain corresponds to 775–787 (KLFNGVFVKSART). Residues 788–808 (SIYTSIYLCLLAIELLFLLGI) traverse the membrane as a helical segment. At 809–814 (EQTETS) the chain is on the extracellular side. The chain crosses the membrane as a helical span at residues 815–835 (IFCGFITIFLHCAILSGTAWF). The Cytoplasmic segment spans residues 836–861 (CYEAFHSYSTLTSDELLLEVDQTPKV). The helical transmembrane segment at 862–882 (NCYYLLSYGLSLSVVAISLVI) threads the bilayer. Residues 883–906 (DPSTYTQNDYCVLMEANALFYATF) are Extracellular-facing. The chain crosses the membrane as a helical span at residues 907-927 (VVPVLVFFVAAIGYTFLSWII). The Cytoplasmic portion of the chain corresponds to 928 to 954 (MCRKSRTGLKTKEHTRLASVRFDIRCS). A helical membrane pass occupies residues 955 to 975 (FVFLLLLSAVWCSAYFYLRGA). Over 976-985 (KMDDDTADVY) the chain is Extracellular. The helical transmembrane segment at 986–1006 (GYCFICFNTLLGLYIFVFHCI) threads the bilayer. Residues 1007–1693 (QNEKIRREYR…VRCYLEPLAK (687 aa)) are Cytoplasmic-facing. Ser1142 carries the phosphoserine modification. Disordered regions lie at residues 1156–1194 (HKQQ…LKTP), 1220–1247 (KPNS…LHSR), 1294–1319 (QQQL…AEQH), 1433–1521 (GGGS…SDER), and 1601–1673 (LAVN…QQRH). Phosphoserine occurs at positions 1239 and 1246. Over residues 1294–1309 (QQQLRRQQLHQQQQQL) the composition is skewed to low complexity. Ser1310 and Ser1311 each carry phosphoserine. The segment covering 1439–1464 (GGSVSSRSQQQQLKKQQQQQSLAQQR) has biased composition (low complexity). Composition is skewed to acidic residues over residues 1472–1486 (DDDD…EEAT) and 1496–1507 (CDEDEEEDESDL). Positions 1508–1521 (EHDAHGLPPQSDER) are enriched in basic and acidic residues. Residues 1630–1655 (LQKLSPQSTTSSSSHTSHSNPNLHPH) show a composition bias toward low complexity. Basic residues predominate over residues 1656–1672 (QLTHPHPHQHPPHHQQR).

It belongs to the G-protein coupled receptor 2 family. LN-TM7 subfamily. In terms of assembly, forms a heterodimer, consisting of a large extracellular region non-covalently linked to a seven-transmembrane moiety. Post-translationally, proteolytically cleaved into 2 subunits, an extracellular subunit and a seven-transmembrane subunit.

The protein localises to the cell membrane. In Drosophila sechellia (Fruit fly), this protein is Latrophilin Cirl.